A 239-amino-acid chain; its full sequence is Tryptophan synthase alpha chain (239 aa).

Active-site proton acceptor residues include glutamate 34 and aspartate 45.

It belongs to the TrpA family. Tetramer of two alpha and two beta chains.

The catalysed reaction is (1S,2R)-1-C-(indol-3-yl)glycerol 3-phosphate + L-serine = D-glyceraldehyde 3-phosphate + L-tryptophan + H2O. The protein operates within amino-acid biosynthesis; L-tryptophan biosynthesis; L-tryptophan from chorismate: step 5/5. The alpha subunit is responsible for the aldol cleavage of indoleglycerol phosphate to indole and glyceraldehyde 3-phosphate. The chain is Tryptophan synthase alpha chain from Thermotoga petrophila (strain ATCC BAA-488 / DSM 13995 / JCM 10881 / RKU-1).